The following is a 236-amino-acid chain: UPF0257 lipoprotein YnfC (236 aa).

An N-terminal signal peptide occupies residues 1–16; the sequence is MKYKLLPCLLAIFLTG. C17 carries N-palmitoyl cysteine lipidation. The S-diacylglycerol cysteine moiety is linked to residue C17.

This sequence belongs to the UPF0257 family.

Its subcellular location is the cell membrane. This is UPF0257 lipoprotein YnfC from Escherichia coli O7:K1 (strain IAI39 / ExPEC).